The sequence spans 79 residues: MAPQTLLPVLVLCVLLLQAQGGYRDKKRMQKTQLSPEIKVCQQQPKLYLCKHLCESHRDCQANNICCSTYCGNVCMSIL.

The first 21 residues, 1-21 (MAPQTLLPVLVLCVLLLQAQG), serve as a signal peptide directing secretion. The WAP domain maps to 34–79 (LSPEIKVCQQQPKLYLCKHLCESHRDCQANNICCSTYCGNVCMSIL). 4 disulfides stabilise this stretch: Cys-41/Cys-67, Cys-50/Cys-71, Cys-54/Cys-66, and Cys-60/Cys-75.

It is found in the secreted. The protein is WAP four-disulfide core domain protein 10A (WFDC10A) of Homo sapiens (Human).